We begin with the raw amino-acid sequence, 385 residues long: Zinc finger protein B385R (385 aa).

2 consecutive C2H2-type zinc fingers follow at residues 166 to 190 and 168 to 190; these read LQCP…FYNH and CPNC…FYNH.

The protein belongs to the asfivirus B385R family.

This is Zinc finger protein B385R from African swine fever virus (isolate Tick/Malawi/Lil 20-1/1983) (ASFV).